The following is a 266-amino-acid chain: MKLSLSPPPYADAPVVVLISGLGGSGSYWLPQLAVLDQEYQVVCYDQRGTGNNPDTLAEDYSIAQMAAELHQALVAAGIERYAVVGHALGALVGMQLALDYPASVTVLVSVNGWLRINTHTRRCFQVREQLLHSGGAQAWVEAQPLFLYPADWMAARAPRLEAEDALALAHFQGKNNLLRRLNALKRADFSHHADRIRCPVQIICASDDLLVPTACSSELHAALPDSQKMVMRYGGHACNVTDPETFNALLLNGLASLLHHREAAL.

It belongs to the AB hydrolase superfamily. Hydrolase RutD family.

The catalysed reaction is carbamate + 2 H(+) = NH4(+) + CO2. Functionally, involved in pyrimidine catabolism. May facilitate the hydrolysis of carbamate, a reaction that can also occur spontaneously. The sequence is that of Putative carbamate hydrolase RutD from Escherichia coli O150:H5 (strain SE15).